The following is a 199-amino-acid chain: MAP6 domain-containing protein 1 (199 aa).

S-palmitoyl cysteine attachment occurs at residues Cys-5, Cys-10, and Cys-11. Residues 33 to 110 (YSDLDSEEPG…SAQSSAPPAP (78 aa)) form a disordered region. The residue at position 38 (Ser-38) is a Phosphoserine. 2 mn regions span residues 130-143 (TTSY…WTGV) and 165-177 (DSSP…VPEV). Ser-167 is modified (phosphoserine).

Belongs to the STOP family. Interacts with calmodulin. Palmitoylated. Palmitoylation enhances association with microtubules.

Its subcellular location is the golgi apparatus. The protein localises to the cytoplasm. The protein resides in the cytoskeleton. Functionally, may have microtubule-stabilizing activity. The sequence is that of MAP6 domain-containing protein 1 (MAP6D1) from Homo sapiens (Human).